We begin with the raw amino-acid sequence, 416 residues long: Histidine--tRNA ligase (416 aa).

Belongs to the class-II aminoacyl-tRNA synthetase family. As to quaternary structure, homodimer.

The protein localises to the cytoplasm. It carries out the reaction tRNA(His) + L-histidine + ATP = L-histidyl-tRNA(His) + AMP + diphosphate + H(+). The chain is Histidine--tRNA ligase from Clostridium novyi (strain NT).